The chain runs to 187 residues: Ribosome-recycling factor (187 aa).

It belongs to the RRF family.

The protein localises to the cytoplasm. Its function is as follows. Responsible for the release of ribosomes from messenger RNA at the termination of protein biosynthesis. May increase the efficiency of translation by recycling ribosomes from one round of translation to another. The polypeptide is Ribosome-recycling factor (Ruegeria pomeroyi (strain ATCC 700808 / DSM 15171 / DSS-3) (Silicibacter pomeroyi)).